Consider the following 301-residue polypeptide: Heme A synthase (301 aa).

The Cytoplasmic portion of the chain corresponds to 1-5 (MHKKL). Residues 6 to 26 (AFFSGFVTLGMMLVLIMGGTV) traverse the membrane as a helical segment. Topologically, residues 27 to 62 (TKTDSGDGCGTDWPLCHGKLIPTNPSVETMIEYSHR) are extracellular. An intrachain disulfide couples C35 to C42. The active site involves E58. Residue H61 participates in heme o binding. Residues 63–83 (VVSGIEGLLIIALAIWTFIAV) traverse the membrane as a helical segment. Over 84–90 (KHRVDVK) the chain is Cytoplasmic. The helical transmembrane segment at 91–111 (IFAFLAFIFMLIQSIIGAGAV) threads the bilayer. Residues 112-121 (IWQQSDAILA) lie on the Extracellular side of the membrane. The helical transmembrane segment at 122–142 (LHFGISLVSFASLLILTILLF) threads the bilayer. Heme o is bound at residue H123. Residues 143–158 (EGDREHQVVSRRLRSH) are Cytoplasmic-facing. The chain crosses the membrane as a helical span at residues 159–179 (LYGLSIYTMIVVYTGAYVRHL). At 180-203 (GATYACVGWPICEQEVWTFESYVQ) the chain is on the extracellular side. An intrachain disulfide couples C185 to C191. Residues 204–224 (MGHRVMAGLLVLYTLYVLYLA) form a helical membrane-spanning segment. Heme b is bound at residue H206. Residues 225–234 (RKEMNRLIER) are Cytoplasmic-facing. The helical transmembrane segment at 235 to 255 (GMMASLFFILLQVGTGAWIVL) threads the bilayer. Topologically, residues 256 to 259 (GGHA) are extracellular. Residues 260–280 (TYVPLLHAFLITCYFGILSYL) form a helical membrane-spanning segment. H266 is a binding site for heme b. Residues 281 to 301 (SYHAYRSTARQDGAQLKNMNG) are Cytoplasmic-facing.

It belongs to the COX15/CtaA family. Type 1 subfamily. In terms of assembly, interacts with CtaB. It depends on heme b as a cofactor.

The protein localises to the cell membrane. The catalysed reaction is Fe(II)-heme o + 2 A + H2O = Fe(II)-heme a + 2 AH2. Its pathway is porphyrin-containing compound metabolism; heme A biosynthesis; heme A from heme O: step 1/1. In terms of biological role, catalyzes the conversion of heme O to heme A by two successive hydroxylations of the methyl group at C8. The first hydroxylation forms heme I, the second hydroxylation results in an unstable dihydroxymethyl group, which spontaneously dehydrates, resulting in the formyl group of heme A. The polypeptide is Heme A synthase (Exiguobacterium sp. (strain ATCC BAA-1283 / AT1b)).